Consider the following 448-residue polypeptide: NADP-specific glutamate dehydrogenase (448 aa).

Substrate-binding residues include Lys88, Gln109, and Lys112. The active-site Proton donor is the Lys124. Residue Gly163 coordinates substrate. Thr207 and Asn238 together coordinate NADP(+). Ser381 contributes to the substrate binding site.

The protein belongs to the Glu/Leu/Phe/Val dehydrogenases family. As to quaternary structure, homohexamer.

It carries out the reaction L-glutamate + NADP(+) + H2O = 2-oxoglutarate + NH4(+) + NADPH + H(+). Catalyzes the reversible oxidative deamination of glutamate to alpha-ketoglutarate and ammonia. In Helicobacter pylori (strain ATCC 700392 / 26695) (Campylobacter pylori), this protein is NADP-specific glutamate dehydrogenase (gdhA).